The sequence spans 562 residues: Bifunctional coenzyme A synthase (562 aa).

A phosphoserine mark is found at serine 177 and serine 182. The tract at residues 179–357 (VARSAKQPVR…HKRPELPPGC (179 aa)) is phosphopantetheine adenylyltransferase. Residues 359 to 562 (VIGLTGISGS…KRISEAPSDP (204 aa)) form the DPCK domain. 364 to 371 (GISGSGKS) provides a ligand contact to ATP.

In the central section; belongs to the eukaryotic CoaD family. In terms of assembly, monomer. The N-terminus is blocked.

Its subcellular location is the cytoplasm. It localises to the mitochondrion matrix. The enzyme catalyses (R)-4'-phosphopantetheine + ATP + H(+) = 3'-dephospho-CoA + diphosphate. It carries out the reaction 3'-dephospho-CoA + ATP = ADP + CoA + H(+). Its pathway is cofactor biosynthesis; coenzyme A biosynthesis; CoA from (R)-pantothenate: step 4/5. It functions in the pathway cofactor biosynthesis; coenzyme A biosynthesis; CoA from (R)-pantothenate: step 5/5. In terms of biological role, bifunctional enzyme that catalyzes the fourth and fifth sequential steps of CoA biosynthetic pathway. The fourth reaction is catalyzed by the phosphopantetheine adenylyltransferase, coded by the coaD domain; the fifth reaction is catalyzed by the dephospho-CoA kinase, coded by the coaE domain. May act as a point of CoA biosynthesis regulation. The protein is Bifunctional coenzyme A synthase of Sus scrofa (Pig).